The sequence spans 393 residues: S-adenosylmethionine synthase 2 (393 aa).

Glu9 contributes to the Mg(2+) binding site. An ATP-binding site is contributed by His15. A K(+)-binding site is contributed by Glu43. L-methionine is bound by residues Glu56 and Gln99. Residues 167-169, 235-238, Asp246, 252-253, Ala269, Lys273, and Lys277 contribute to the ATP site; these read DGK, SGRF, and RK. Residue Asp246 participates in L-methionine binding. Lys277 contributes to the L-methionine binding site.

The protein belongs to the AdoMet synthase family. In terms of assembly, homotetramer. It depends on Mn(2+) as a cofactor. The cofactor is Mg(2+). Co(2+) is required as a cofactor. K(+) serves as cofactor. As to expression, roots and shoots.

The protein localises to the cytoplasm. The enzyme catalyses L-methionine + ATP + H2O = S-adenosyl-L-methionine + phosphate + diphosphate. It functions in the pathway amino-acid biosynthesis; S-adenosyl-L-methionine biosynthesis; S-adenosyl-L-methionine from L-methionine: step 1/1. Functionally, catalyzes the formation of S-adenosylmethionine from methionine and ATP. The reaction comprises two steps that are both catalyzed by the same enzyme: formation of S-adenosylmethionine (AdoMet) and triphosphate, and subsequent hydrolysis of the triphosphate. This chain is S-adenosylmethionine synthase 2 (SAMS2), found in Pinus contorta (Shore pine).